A 400-amino-acid chain; its full sequence is Involucrin (400 aa).

Disordered stretches follow at residues 1–196 (MSQQ…HLKQ), 273–312 (KEEV…EQQL), and 333–381 (KRDE…KGEV). Composition is skewed to low complexity over residues 78-159 (QQQQ…QQHQ), 169-186 (EQQQ…GQQE), and 279-292 (EQQQ…QQHQ). The segment covering 333 to 344 (KRDEQLGKKEEQ) has biased composition (basic and acidic residues). Positions 346-358 (LEPSEQQEGLLEQ) are enriched in low complexity.

Belongs to the involucrin family. As to quaternary structure, directly or indirectly cross-linked to cornifelin (CNFN). In terms of processing, substrate of transglutaminase. Specific glutamines or lysines are cross-linked to keratins, desmoplakin and to inter involucrin molecules. As to expression, keratinocytes of epidermis and other stratified squamous epithelia.

It is found in the cytoplasm. In terms of biological role, part of the insoluble cornified cell envelope (CE) of stratified squamous epithelia. The protein is Involucrin (IVL) of Tupaia glis (Common tree shrew).